A 192-amino-acid polypeptide reads, in one-letter code: Xanthine phosphoribosyltransferase (192 aa).

L20 and N27 together coordinate xanthine. 5-phospho-alpha-D-ribose 1-diphosphate is bound at residue 128–132; that stretch reads AHGEA. Xanthine is bound at residue K156.

It belongs to the purine/pyrimidine phosphoribosyltransferase family. Xpt subfamily. As to quaternary structure, homodimer.

Its subcellular location is the cytoplasm. The enzyme catalyses XMP + diphosphate = xanthine + 5-phospho-alpha-D-ribose 1-diphosphate. Its pathway is purine metabolism; XMP biosynthesis via salvage pathway; XMP from xanthine: step 1/1. Converts the preformed base xanthine, a product of nucleic acid breakdown, to xanthosine 5'-monophosphate (XMP), so it can be reused for RNA or DNA synthesis. This chain is Xanthine phosphoribosyltransferase, found in Lactobacillus acidophilus (strain ATCC 700396 / NCK56 / N2 / NCFM).